A 316-amino-acid chain; its full sequence is uncharacterized protein (316 aa).

This sequence belongs to the chlamydial CPn_0441/CT_007/TC_0275 family.

This is an uncharacterized protein from Chlamydia trachomatis serovar D (strain ATCC VR-885 / DSM 19411 / UW-3/Cx).